We begin with the raw amino-acid sequence, 724 residues long: RINT1-like protein (724 aa).

The RINT1/TIP20 domain maps to 163–724; sequence RLHAVQAQSL…LERRMDIKMF (562 aa).

It belongs to the RINT1 family.

Its function is as follows. During cytokinesis in male meiotic cells, required for completion of cleavage furrow ingression possibly in conjunction with Zw10. Required for maintenance of Golgi stack number and morphology. Essential for acroblast assembly. This chain is RINT1-like protein, found in Drosophila melanogaster (Fruit fly).